Here is an 87-residue protein sequence, read N- to C-terminus: Mitochondrial import protein 2 (87 aa).

Topologically, residues Met-1–Gln-53 are cytoplasmic. A helical transmembrane segment spans residues Leu-54–Gly-71. Residues Arg-72–Val-87 lie on the Mitochondrial intermembrane side of the membrane.

The protein belongs to the MIM2 family. As to quaternary structure, component of the MIM complex containing at least MIM1 and MIM2. Interacts with MIM1; interaction is direct.

The protein localises to the mitochondrion outer membrane. In terms of biological role, component of the MIM complex required for outer membrane protein import. Involved in import of the subset of proteins with multiple alpha-helical transmembrane segments, including UGO1, TOM20 and FZO1. The protein is Mitochondrial import protein 2 of Saccharomyces cerevisiae (strain ATCC 204508 / S288c) (Baker's yeast).